Reading from the N-terminus, the 421-residue chain is NADH-quinone oxidoreductase subunit F 2 (421 aa).

NAD(+) is bound at residue 53–62; the sequence is GRGGAGFPTG. 165–212 contributes to the FMN binding site; it reads GAGAYICGEETAMLESLEGKRAQPRLKPPFPAVAGLYASPTVINNVET. The [4Fe-4S] cluster site is built by cysteine 342, cysteine 345, cysteine 348, and cysteine 388.

It belongs to the complex I 51 kDa subunit family. Requires FMN as cofactor. [4Fe-4S] cluster serves as cofactor.

It carries out the reaction a quinone + NADH + 5 H(+)(in) = a quinol + NAD(+) + 4 H(+)(out). Functionally, NDH-1 shuttles electrons from NADH, via FMN and iron-sulfur (Fe-S) centers, to quinones in the respiratory chain. The immediate electron acceptor for the enzyme in this species is believed to be ubiquinone. Couples the redox reaction to proton translocation (for every two electrons transferred, four hydrogen ions are translocated across the cytoplasmic membrane), and thus conserves the redox energy in a proton gradient. The sequence is that of NADH-quinone oxidoreductase subunit F 2 (nuoF2) from Rhizobium meliloti (strain 1021) (Ensifer meliloti).